Consider the following 41-residue polypeptide: Large ribosomal subunit protein bL36 (41 aa).

This sequence belongs to the bacterial ribosomal protein bL36 family.

This chain is Large ribosomal subunit protein bL36, found in Pelagibacter ubique (strain HTCC1062).